Reading from the N-terminus, the 921-residue chain is Probable dipeptidyl-aminopeptidase B (921 aa).

The interval 1–87 (MDAPATASRQ…EADTNDLETG (87 aa)) is disordered. Residues 1 to 108 (MDAPATASRQ…RVGVDRGLKK (108 aa)) lie on the Cytoplasmic side of the membrane. A compositionally biased stretch (low complexity) spans 22-33 (SSLSTVSTTSLV). Residues 35–45 (DRLHEHNEKSY) show a composition bias toward basic and acidic residues. The span at 66–75 (PDDDDDDDES) shows a compositional bias: acidic residues. A helical; Signal-anchor for type II membrane protein membrane pass occupies residues 109 to 129 (VILILAAAFLFAWGAALFVFL). Over 130-921 (SNKSYKHAST…KPIVEPKARV (792 aa)) the chain is Vacuolar. 3 N-linked (GlcNAc...) asparagine glycosylation sites follow: Asn131, Asn364, and Asn577. Catalysis depends on Ser768, which acts as the Charge relay system. Asn827 is a glycosylation site (N-linked (GlcNAc...) asparagine). Residues Asp845 and His878 each act as charge relay system in the active site.

Belongs to the peptidase S9B family.

It is found in the vacuole membrane. It carries out the reaction Release of an N-terminal dipeptide, Xaa-Yaa-|-Zaa-, from a polypeptide, preferentially when Yaa is Pro, provided Zaa is neither Pro nor hydroxyproline.. Functionally, type IV dipeptidyl-peptidase which removes N-terminal dipeptides sequentially from polypeptides having unsubstituted N-termini provided that the penultimate residue is proline. The sequence is that of Probable dipeptidyl-aminopeptidase B (DAPB) from Colletotrichum graminicola (strain M1.001 / M2 / FGSC 10212) (Maize anthracnose fungus).